The following is a 388-amino-acid chain: Succinate--CoA ligase [ADP-forming] subunit beta (388 aa).

An ATP-grasp domain is found at 9–245 (KELLKSYGLP…KSQENERELK (237 aa)). ATP contacts are provided by residues Lys46, 53–55 (GRG), Glu100, Tyr103, and Glu108. Mg(2+) is bound by residues Asn200 and Asp214. Residues Asn265 and 322–324 (GIV) contribute to the substrate site.

It belongs to the succinate/malate CoA ligase beta subunit family. As to quaternary structure, heterotetramer of two alpha and two beta subunits. Mg(2+) serves as cofactor.

It carries out the reaction succinate + ATP + CoA = succinyl-CoA + ADP + phosphate. It catalyses the reaction GTP + succinate + CoA = succinyl-CoA + GDP + phosphate. The protein operates within carbohydrate metabolism; tricarboxylic acid cycle; succinate from succinyl-CoA (ligase route): step 1/1. Its function is as follows. Succinyl-CoA synthetase functions in the citric acid cycle (TCA), coupling the hydrolysis of succinyl-CoA to the synthesis of either ATP or GTP and thus represents the only step of substrate-level phosphorylation in the TCA. The beta subunit provides nucleotide specificity of the enzyme and binds the substrate succinate, while the binding sites for coenzyme A and phosphate are found in the alpha subunit. The polypeptide is Succinate--CoA ligase [ADP-forming] subunit beta (Psychrobacter cryohalolentis (strain ATCC BAA-1226 / DSM 17306 / VKM B-2378 / K5)).